The chain runs to 310 residues: Protoheme IX farnesyltransferase 2 (310 aa).

9 helical membrane passes run 25 to 45, 49 to 69, 98 to 118, 121 to 141, 145 to 165, 176 to 196, 222 to 242, 245 to 265, and 277 to 297; these read PGIIFGNLISVAGGFLLAAKG, LVLMLASLVGLSLVVASGCAI, HVLLFGIALGVLGFGILALFT, LALLFAAIGYVVYVGIYSLYM, SVYGTLVGSFSGAVPPVVGYC, VILLLMFSLWQMPHSYAIAIF, IVLYIAVFALVSTMLPLAGYT, AFMAVTCATSLWWLTMALKGY, and QVFGFSIITITALSVTMALDF.

Belongs to the UbiA prenyltransferase family. Protoheme IX farnesyltransferase subfamily.

It localises to the cell inner membrane. It carries out the reaction heme b + (2E,6E)-farnesyl diphosphate + H2O = Fe(II)-heme o + diphosphate. The protein operates within porphyrin-containing compound metabolism; heme O biosynthesis; heme O from protoheme: step 1/1. Converts heme B (protoheme IX) to heme O by substitution of the vinyl group on carbon 2 of heme B porphyrin ring with a hydroxyethyl farnesyl side group. In Shewanella sp. (strain ANA-3), this protein is Protoheme IX farnesyltransferase 2.